Consider the following 314-residue polypeptide: Deoxymugineic acid synthase 1 (314 aa).

The tract at residues 1 to 21 (MGAGDRTVAGMPRIGMGTAVQ) is disordered. Residue Asp-44 participates in NADP(+) binding. The active-site Proton donor is the Tyr-49. His-112 lines the substrate pocket. NADP(+) contacts are provided by residues 158–159 (AN), Gln-180, 258–266 (FDEARMREN), and 273–281 (ELTEEERRR).

Belongs to the aldo/keto reductase family.

It carries out the reaction 2'-deoxymugineate + NAD(+) = 3''-deamino-3''-oxonicotianamine + NADH + H(+). The catalysed reaction is 2'-deoxymugineate + NADP(+) = 3''-deamino-3''-oxonicotianamine + NADPH + H(+). It functions in the pathway siderophore biosynthesis. In terms of biological role, catalyzes the reduction of a 3''-keto intermediate during the biosynthesis of 2'-deoxymugineic acid (DMA) from L-Met. Involved in the formation of phytosiderophores (MAs) belonging to the mugineic acid family and required to acquire iron. This is Deoxymugineic acid synthase 1 from Hordeum vulgare (Barley).